The sequence spans 946 residues: Inositol-trisphosphate 3-kinase B (946 aa).

Disordered regions lie at residues 19–128 (EMKS…EEAK), 156–288 (AQSS…TRSC), 308–472 (ARVT…GIPS), 486–561 (KDLK…RKAC), and 580–638 (GALE…HTLD). 3 positions are modified to phosphoserine: S43, S49, and S71. Low complexity predominate over residues 83-105 (NSSSGSGSGSSGSSVSSPSWAGR). A phosphoserine mark is found at S204 and S269. Positions 396 to 411 (TTVSVQSAESSDSLSW) are enriched in polar residues. The span at 445-458 (GGSPTLGLLGGSPS) shows a compositional bias: low complexity. Residues 524-534 (TGVQSEGTWES) are compositionally biased toward polar residues. Residues 599 to 612 (SSSSASSTGFSSSY) are compositionally biased toward low complexity. ATP is bound by residues S679, K690, 730 to 732 (DDL), and D743. Substrate is bound by residues K745 and R766. A calmodulin-binding region spans residues 768 to 776 (DMYQKMIEV). 793–800 (KPRYMQWR) contributes to the substrate binding site. ATP contacts are provided by K817 and D897. K900 contributes to the substrate binding site.

The protein belongs to the inositol phosphokinase (IPK) family. As to quaternary structure, interacts with DMTN.

The protein resides in the cytoplasm. The protein localises to the cytoskeleton. It is found in the endoplasmic reticulum. The enzyme catalyses 1D-myo-inositol 1,4,5-trisphosphate + ATP = 1D-myo-inositol 1,3,4,5-tetrakisphosphate + ADP + H(+). With respect to regulation, IP3K is activated by calcium and calmodulin. Form B is much more sensitive to calcium/calmodulin than form A. Functionally, catalyzes the phosphorylation of 1D-myo-inositol 1,4,5-trisphosphate (InsP3) into 1D-myo-inositol 1,3,4,5-tetrakisphosphate and participates to the regulation of calcium homeostasis. The polypeptide is Inositol-trisphosphate 3-kinase B (Homo sapiens (Human)).